The chain runs to 267 residues: Auxin-responsive protein IAA18 (267 aa).

Residues 42–46 (LELKL) carry the EAR-like (transcriptional repression) motif. The tract at residues 81 to 101 (PSSTKTTSHKRTAPGPVVGWP) is disordered. The PB1 domain maps to 149–248 (GMFVKINMYG…SVKRLRVIKT (100 aa)).

The protein belongs to the Aux/IAA family. As to quaternary structure, homodimers and heterodimers. Interacts with TPL.

It is found in the nucleus. Its function is as follows. Aux/IAA proteins are short-lived transcriptional factors that function as repressors of early auxin response genes at low auxin concentrations. Repression is thought to result from the interaction with auxin response factors (ARFs), proteins that bind to the auxin-responsive promoter element (AuxRE). Formation of heterodimers with ARF proteins may alter their ability to modulate early auxin response genes expression. The polypeptide is Auxin-responsive protein IAA18 (IAA18) (Arabidopsis thaliana (Mouse-ear cress)).